The chain runs to 85 residues: Phosphocarrier protein HPr (85 aa).

The region spanning 1–85 is the HPr domain; the sequence is MFQQEVTITA…HLVKLMAELE (85 aa). The active-site Pros-phosphohistidine intermediate is His15.

Belongs to the HPr family.

The protein localises to the cytoplasm. In terms of biological role, general (non sugar-specific) component of the phosphoenolpyruvate-dependent sugar phosphotransferase system (sugar PTS). This major carbohydrate active-transport system catalyzes the phosphorylation of incoming sugar substrates concomitantly with their translocation across the cell membrane. The phosphoryl group from phosphoenolpyruvate (PEP) is transferred to the phosphoryl carrier protein HPr by enzyme I. Phospho-HPr then transfers it to the PTS EIIA domain. In Escherichia coli O157:H7, this protein is Phosphocarrier protein HPr (ptsH).